Reading from the N-terminus, the 96-residue chain is Co-chaperonin GroES (96 aa).

It belongs to the GroES chaperonin family. In terms of assembly, heptamer of 7 subunits arranged in a ring. Interacts with the chaperonin GroEL.

Its subcellular location is the cytoplasm. In terms of biological role, together with the chaperonin GroEL, plays an essential role in assisting protein folding. The GroEL-GroES system forms a nano-cage that allows encapsulation of the non-native substrate proteins and provides a physical environment optimized to promote and accelerate protein folding. GroES binds to the apical surface of the GroEL ring, thereby capping the opening of the GroEL channel. This Nitrosococcus oceani (strain ATCC 19707 / BCRC 17464 / JCM 30415 / NCIMB 11848 / C-107) protein is Co-chaperonin GroES.